The sequence spans 60 residues: Large ribosomal subunit protein bL32 (60 aa).

Residues 1–43 (MAVQQNRKTRSRRGMRRSHDALTGKTLSVDSTTGEKHLRHHVT) are disordered. Over residues 7-16 (RKTRSRRGMR) the composition is skewed to basic residues.

The protein belongs to the bacterial ribosomal protein bL32 family.

The protein is Large ribosomal subunit protein bL32 of Saccharophagus degradans (strain 2-40 / ATCC 43961 / DSM 17024).